Here is a 401-residue protein sequence, read N- to C-terminus: Enolase (401 aa).

Gln154 contributes to the (2R)-2-phosphoglycerate binding site. The active-site Proton donor is the Glu197. Residues Asp233, Glu274, and Asp301 each coordinate Mg(2+). Residues Lys326, Arg355, Ser356, and Lys377 each coordinate (2R)-2-phosphoglycerate. Lys326 serves as the catalytic Proton acceptor.

This sequence belongs to the enolase family. Requires Mg(2+) as cofactor.

It is found in the cytoplasm. The protein localises to the secreted. It localises to the cell surface. It carries out the reaction (2R)-2-phosphoglycerate = phosphoenolpyruvate + H2O. It functions in the pathway carbohydrate degradation; glycolysis; pyruvate from D-glyceraldehyde 3-phosphate: step 4/5. Functionally, catalyzes the reversible conversion of 2-phosphoglycerate (2-PG) into phosphoenolpyruvate (PEP). It is essential for the degradation of carbohydrates via glycolysis. This chain is Enolase, found in Thermoplasma acidophilum (strain ATCC 25905 / DSM 1728 / JCM 9062 / NBRC 15155 / AMRC-C165).